Here is a 440-residue protein sequence, read N- to C-terminus: Protein disulfide-isomerase A6 (440 aa).

An N-terminal signal peptide occupies residues 1-19 (MARLVLGLVSCTFFLAVSG). 2 consecutive Thioredoxin domains span residues 20–133 (LYSS…ALRQ) and 151–287 (QGRG…EDIA). An intrachain disulfide couples C55 to C58. Phosphoserine occurs at positions 129, 156, and 158. Positions 139–161 (LGGRSGGYSSGKQGRGDSSSKKD) are disordered. Residues 152–161 (GRGDSSSKKD) are compositionally biased toward basic and acidic residues. Residues C190 and C193 are joined by a disulfide bond. The segment at 399 to 440 (GGGSFPTITPREPWDGKDGELPVEDDIDLSDVELDDLEKDEL) is disordered. Positions 419 to 440 (LPVEDDIDLSDVELDDLEKDEL) are enriched in acidic residues. A Phosphoserine modification is found at S428. The short motif at 437-440 (KDEL) is the Prevents secretion from ER element.

The protein belongs to the protein disulfide isomerase family. As to quaternary structure, part of a large chaperone multiprotein complex comprising DNAJB11, HSP90B1, HSPA5, HYOU, PDIA2, PDIA4, PDIA6, PPIB, SDF2L1, UGGT1 and very small amounts of ERP29, but not, or at very low levels, CALR nor CANX. Interacts with MICA on the surface of tumor cells, leading to MICA disulfide bond reduction which is required for its release from tumor cells. Interacts with ITGB3 following platelet stimulation. Interacts with ERN1; the interaction is direct. Interacts with EIF2AK3.

The protein resides in the endoplasmic reticulum lumen. It localises to the cell membrane. The protein localises to the melanosome. It carries out the reaction Catalyzes the rearrangement of -S-S- bonds in proteins.. May function as a chaperone that inhibits aggregation of misfolded proteins. Negatively regulates the unfolded protein response (UPR) through binding to UPR sensors such as ERN1, which in turn inactivates ERN1 signaling. May also regulate the UPR via the EIF2AK3 UPR sensor. Plays a role in platelet aggregation and activation by agonists such as convulxin, collagen and thrombin. The chain is Protein disulfide-isomerase A6 (Pdia6) from Mus musculus (Mouse).